Reading from the N-terminus, the 362-residue chain is Outer mitochondrial transmembrane helix translocase (362 aa).

Topologically, residues 1 to 19 (MVLKEIPTENITRPLGRNE) are mitochondrial intermembrane. The chain crosses the membrane as a helical span at residues 20-42 (VIGLLFRLTIFGAVTYFTIKWMV). Residues 43–362 (DAIDPTRKQK…HEAFMQVPLD (320 aa)) lie on the Cytoplasmic side of the membrane. 137 to 144 (GPPGCGKT) contributes to the ATP binding site.

Belongs to the AAA ATPase family. MSP1 subfamily.

The protein localises to the mitochondrion outer membrane. Its subcellular location is the peroxisome membrane. The protein resides in the postsynaptic cell membrane. It catalyses the reaction [protein]-with a C-terminal TM segment(out) + ATP + H2O = [protein]-with a C-terminal TM segment(in) + ADP + phosphate + H(+). Functionally, outer mitochondrial translocase required to remove mislocalized tail-anchored transmembrane proteins on mitochondria. Specifically recognizes and binds tail-anchored transmembrane proteins: acts as a dislocase that mediates the ATP-dependent extraction of mistargeted tail-anchored transmembrane proteins from the mitochondrion outer membrane. Also plays a critical role in regulating the surface expression of AMPA receptors (AMPAR), thereby regulating synaptic plasticity and learning and memory. This is Outer mitochondrial transmembrane helix translocase from Danio rerio (Zebrafish).